A 310-amino-acid chain; its full sequence is Ribosomal RNA small subunit methyltransferase H (310 aa).

S-adenosyl-L-methionine contacts are provided by residues 32-34 (GGH), Asp52, Phe79, Asp100, and Gln107.

This sequence belongs to the methyltransferase superfamily. RsmH family.

It is found in the cytoplasm. The enzyme catalyses cytidine(1402) in 16S rRNA + S-adenosyl-L-methionine = N(4)-methylcytidine(1402) in 16S rRNA + S-adenosyl-L-homocysteine + H(+). Its function is as follows. Specifically methylates the N4 position of cytidine in position 1402 (C1402) of 16S rRNA. This Bacillus anthracis (strain A0248) protein is Ribosomal RNA small subunit methyltransferase H.